The sequence spans 129 residues: Profilin-4 (129 aa).

It belongs to the profilin family. Expressed in testis, in germ cells in seminiferous tubules (at protein level).

The protein resides in the cytoplasm. Its function is as follows. Involved in male fertility. Required for manchette development and acrosome biogenesis during spermiogenesis. Binds in vitro to phospholipids, including phosphatidylinositol 3-phosphate (PtdIns(3)P), phosphatidylinositol 4,5-bisphosphate (PtdIns(4,5)P2), phosphatidylinositol 4-phosphate (PtdIns(4)P) and phosphatidic acid (PA). Contrary to other profilin family members, does not bind to actin in vitro. The protein is Profilin-4 (Pfn4) of Mus musculus (Mouse).